Reading from the N-terminus, the 145-residue chain is Transcription antitermination protein NusB (145 aa).

Belongs to the NusB family.

Its function is as follows. Involved in transcription antitermination. Required for transcription of ribosomal RNA (rRNA) genes. Binds specifically to the boxA antiterminator sequence of the ribosomal RNA (rrn) operons. The sequence is that of Transcription antitermination protein NusB from Aromatoleum aromaticum (strain DSM 19018 / LMG 30748 / EbN1) (Azoarcus sp. (strain EbN1)).